A 193-amino-acid chain; its full sequence is Ion-translocating oxidoreductase complex subunit A (193 aa).

6 helical membrane-spanning segments follow: residues 5-25 (ALLF…FLGL), 39-59 (IGMG…SWLV), 62-82 (FILV…LVLA), 102-122 (LLGI…VVLL), 134-154 (TIYG…FAAI), and 171-191 (SIAL…TGLV).

This sequence belongs to the NqrDE/RnfAE family. As to quaternary structure, the complex is composed of six subunits: RnfA, RnfB, RnfC, RnfD, RnfE and RnfG.

The protein resides in the cell inner membrane. Its function is as follows. Part of a membrane-bound complex that couples electron transfer with translocation of ions across the membrane. This Pectobacterium carotovorum subsp. carotovorum (strain PC1) protein is Ion-translocating oxidoreductase complex subunit A.